The chain runs to 234 residues: t-SNARE protein aex-4 (234 aa).

T-SNARE coiled-coil homology domains follow at residues 37 to 99 and 170 to 232; these read AKLN…ITAM and DAIE…VKKL.

Belongs to the SNAP-25 family. As to expression, expressed in intestinal cells.

Its subcellular location is the cell membrane. In terms of biological role, t-SNARE protein which regulates the secretion of aex-5 from intestinal cells. Involved in the defecation motor program, which is a coordinated series of three muscle contractions that occurs every 45 seconds. The protein is t-SNARE protein aex-4 of Caenorhabditis elegans.